The primary structure comprises 319 residues: Dehydrogenase/reductase SDR family member 9 (319 aa).

The N-terminal stretch at 1-20 (MLFWLLALLFLCAFLWNYKG) is a signal peptide. NAD(+) is bound by residues 34-58 (ITGC…RVIA) and aspartate 83. Serine 164 is a substrate binding site. Tyrosine 176 acts as the Proton acceptor in catalysis. Lysine 180 lines the NAD(+) pocket.

The protein belongs to the short-chain dehydrogenases/reductases (SDR) family. Homotetramer.

It is found in the microsome membrane. It localises to the endoplasmic reticulum membrane. It carries out the reaction 3beta-hydroxy-5alpha-pregnane-20-one + NAD(+) = 5alpha-pregnane-3,20-dione + NADH + H(+). It catalyses the reaction 17beta-hydroxy-5alpha-androstan-3-one + NAD(+) = 5alpha-androstan-3,17-dione + NADH + H(+). The catalysed reaction is androsterone + NAD(+) = 5alpha-androstan-3,17-dione + NADH + H(+). The enzyme catalyses 5alpha-androstane-3alpha,17beta-diol + NAD(+) = 17beta-hydroxy-5alpha-androstan-3-one + NADH + H(+). It carries out the reaction all-trans-retinol + NAD(+) = all-trans-retinal + NADH + H(+). It catalyses the reaction 3alpha-hydroxy-5alpha-pregnan-20-one + NAD(+) = 5alpha-pregnane-3,20-dione + NADH + H(+). Its function is as follows. 3-alpha-hydroxysteroid dehydrogenase that converts 3-alpha-tetrahydroprogesterone (allopregnanolone) to dihydroxyprogesterone and 3-alpha-androstanediol to dihydroxyprogesterone. Also plays a role in the biosynthesis of retinoic acid. Can utilize both NADH and NADPH. The chain is Dehydrogenase/reductase SDR family member 9 (Dhrs9) from Mus musculus (Mouse).